The primary structure comprises 575 residues: Trihelix transcription factor GT-2 (575 aa).

The span at 1–11 (MSGNSEGLLES) shows a compositional bias: low complexity. Disordered stretches follow at residues 1–44 (MSGN…RWPR), 157–181 (IPWI…HQVS), 232–256 (FSSS…SSRK), and 339–364 (GGQP…DHSI). The 59-residue stretch at 40–98 (NRWPRPETLALLRIRSEMDKAFRDSTLKAPLWEEISRKMMELGYKRSSKKCKEKFENVY) folds into the Myb-like 1 domain. 2 stretches are compositionally biased toward low complexity: residues 161–172 (SSSNPSTEKSSS) and 232–241 (FSSSTSSSTA). Residues 355-364 (RKQYQSDHSI) are compositionally biased toward polar residues. The Myb-like 2 domain maps to 390–454 (SVSPSSSRWP…RCKEKWENIN (65 aa)). A disordered region spans residues 513-575 (TQTEFETDQR…PMDINNNLFT (63 aa)). Residues 528 to 555 (KEDEEEGESEEDEYDEEEEGEGDNETSE) are compositionally biased toward acidic residues. A compositionally biased stretch (polar residues) spans 561 to 575 (NKTSSPMDINNNLFT).

The protein resides in the nucleus. Probable transcription factor that binds specific DNA sequence. This Arabidopsis thaliana (Mouse-ear cress) protein is Trihelix transcription factor GT-2 (GT-2).